Here is a 375-residue protein sequence, read N- to C-terminus: Succinyl-diaminopimelate desuccinylase (375 aa).

His-66 lines the Zn(2+) pocket. Residue Asp-68 is part of the active site. Residue Asp-99 participates in Zn(2+) binding. The Proton acceptor role is filled by Glu-133. Zn(2+) is bound by residues Glu-134, Glu-162, and His-348.

Belongs to the peptidase M20A family. DapE subfamily. In terms of assembly, homodimer. It depends on Zn(2+) as a cofactor. Co(2+) is required as a cofactor.

It catalyses the reaction N-succinyl-(2S,6S)-2,6-diaminopimelate + H2O = (2S,6S)-2,6-diaminopimelate + succinate. The protein operates within amino-acid biosynthesis; L-lysine biosynthesis via DAP pathway; LL-2,6-diaminopimelate from (S)-tetrahydrodipicolinate (succinylase route): step 3/3. Catalyzes the hydrolysis of N-succinyl-L,L-diaminopimelic acid (SDAP), forming succinate and LL-2,6-diaminopimelate (DAP), an intermediate involved in the bacterial biosynthesis of lysine and meso-diaminopimelic acid, an essential component of bacterial cell walls. This is Succinyl-diaminopimelate desuccinylase from Escherichia coli (strain SE11).